The primary structure comprises 430 residues: Histone acetyltransferase type B subunit 2 (430 aa).

WD repeat units lie at residues 129-169 (PHDG…ALTT), 180-220 (GHTA…FTSS), 233-273 (RHTD…EEEA), 279-319 (AHSK…QRLH), and 323-363 (GHED…EEQT). The tract at residues 365 to 369 (EDAED) is interaction with the histone H4 N-terminus. The stretch at 380-420 (GHTNRISEFSWCPNERWVVGSLADDNILQIWSPSRVIWGRD) is one WD 6 repeat. Ser-425 carries the phosphoserine modification.

This sequence belongs to the WD repeat RBAP46/RBAP48/MSI1 family. In terms of assembly, component of the HAT-B complex composed of at least hat1 and hat2. The HAT-B complex binds to histone H4 tail. Component of the CENP-A recruiting complex composed of at least mis16, mis19, mis19 and mis20.

It localises to the cytoplasm. Its subcellular location is the nucleus. The protein localises to the chromosome. The protein resides in the centromere. It is found in the kinetochore. Functionally, regulatory subunit of the histone acetylase B (HAT-B) complex. The complex acetylates 'Lys-12' of histone H4 which is required for telomeric silencing. Component of the CENP-A recruiting complex that ensures the integrity of mitotic spindles through maintenance of kinetochore factors mis6/CENP-I and cnp1/CENP-A. Maintains the deacetylated state of histones specifically in the central core of the centromeres. This is Histone acetyltransferase type B subunit 2 (mis16) from Schizosaccharomyces pombe (strain 972 / ATCC 24843) (Fission yeast).